A 386-amino-acid chain; its full sequence is MKHSATSSEAHARATWPLPEPTLAYFPNARFVPSDRDLDAGAARPIRGGVAVVDDSPDFGHVPVLLERCVELLTPALTRRHPDGSGAVLLDATLGAGGHAERFLADLPGLRLIALDRDPSALEIARERLARFADRITLVHMRYDGIAAALTESGYAATESVDGILFDLGVSSMQLDRPERGFAYAQDAPLDMRMDPGSPLTAADILNTYDEAELADILHRYGEERFARRIAAQIVRRRAKEPFTSTADLVSLLYQAIPAPARRTGGHPAKRTFQALRIAVNDELDTLRRALPAALDALAVDGRIVVLAYQSLEDRIVKRLFAQAVASRTPVDLPVELPGHEPRFRALTHGAGRADAAEIERNPRSAAVRLRALQRTQAPQATGKGD.

S-adenosyl-L-methionine-binding positions include 97-99 (GGH), Asp-116, Tyr-143, Asp-167, and Gln-174.

Belongs to the methyltransferase superfamily. RsmH family.

The protein localises to the cytoplasm. The catalysed reaction is cytidine(1402) in 16S rRNA + S-adenosyl-L-methionine = N(4)-methylcytidine(1402) in 16S rRNA + S-adenosyl-L-homocysteine + H(+). Its function is as follows. Specifically methylates the N4 position of cytidine in position 1402 (C1402) of 16S rRNA. In Mycolicibacterium paratuberculosis (strain ATCC BAA-968 / K-10) (Mycobacterium paratuberculosis), this protein is Ribosomal RNA small subunit methyltransferase H.